The following is a 1342-amino-acid chain: DNA-directed RNA polymerase subunit beta (1342 aa).

This sequence belongs to the RNA polymerase beta chain family. The RNAP catalytic core consists of 2 alpha, 1 beta, 1 beta' and 1 omega subunit. When a sigma factor is associated with the core the holoenzyme is formed, which can initiate transcription.

The catalysed reaction is RNA(n) + a ribonucleoside 5'-triphosphate = RNA(n+1) + diphosphate. DNA-dependent RNA polymerase catalyzes the transcription of DNA into RNA using the four ribonucleoside triphosphates as substrates. This is DNA-directed RNA polymerase subunit beta from Citrobacter koseri (strain ATCC BAA-895 / CDC 4225-83 / SGSC4696).